Reading from the N-terminus, the 158-residue chain is Transcriptional repressor NrdR (158 aa).

A zinc finger spans residues 3-34 (CPFCNSEETRVIDTRLTDDGHVVRRRRECEHC). The ATP-cone domain maps to 49 to 139 (IFVVKKGGQR…VYKEFRDLDH (91 aa)).

This sequence belongs to the NrdR family. It depends on Zn(2+) as a cofactor.

Negatively regulates transcription of bacterial ribonucleotide reductase nrd genes and operons by binding to NrdR-boxes. The sequence is that of Transcriptional repressor NrdR from Kosmotoga olearia (strain ATCC BAA-1733 / DSM 21960 / TBF 19.5.1).